Consider the following 293-residue polypeptide: Small ribosomal subunit biogenesis GTPase RsgA (293 aa).

One can recognise a CP-type G domain in the interval 63–223; the sequence is KNELVRPPIA…VADTPGFSSL (161 aa). GTP-binding positions include 112-115 and 166-174; these read SKMD and GQSGVGKSS. Zn(2+)-binding residues include C247, C252, H254, and C260.

Belongs to the TRAFAC class YlqF/YawG GTPase family. RsgA subfamily. Monomer. Associates with 30S ribosomal subunit, binds 16S rRNA. It depends on Zn(2+) as a cofactor.

It localises to the cytoplasm. Its function is as follows. One of several proteins that assist in the late maturation steps of the functional core of the 30S ribosomal subunit. Helps release RbfA from mature subunits. May play a role in the assembly of ribosomal proteins into the subunit. Circularly permuted GTPase that catalyzes slow GTP hydrolysis, GTPase activity is stimulated by the 30S ribosomal subunit. This chain is Small ribosomal subunit biogenesis GTPase RsgA, found in Bacillus anthracis.